A 406-amino-acid chain; its full sequence is Olfactomedin-like protein 3 (406 aa).

The N-terminal stretch at 1–21 (MGPSTPLLILFLLSWSGPLQG) is a signal peptide. The stretch at 25 to 101 (HLVEYMERRL…REVDYLETQN (77 aa)) forms a coiled coil. One can recognise an Olfactomedin-like domain in the interval 134-401 (DCGYTISQVR…QIVYKLEMRK (268 aa)). A disulfide bond links cysteine 135 and cysteine 328. N-linked (GlcNAc...) asparagine glycans are attached at residues asparagine 177 and asparagine 248.

The protein belongs to the OLFML3 family. In terms of tissue distribution, abundant in placenta, moderate in liver and heart, whereas fairly weak in other tissues examined. On term placenta, mainly localized extracellularly surrounding the syncytiotrophoblastic cells and very rarely expressed in the maternal decidua layer.

It localises to the secreted. Its function is as follows. Secreted scaffold protein that plays an essential role in dorsoventral patterning during early development. Stabilizes axial formation by restricting chordin (CHRD) activity on the dorsal side. Acts by facilitating the association between the tolloid proteases and their substrate chordin (CHRD), leading to enhance chordin (CHRD) degradation. May have matrix-related function involved in placental and embryonic development, or play a similar role in other physiological processes. The sequence is that of Olfactomedin-like protein 3 (OLFML3) from Homo sapiens (Human).